The sequence spans 104 residues: Large ribosomal subunit protein bL21 (104 aa).

The protein belongs to the bacterial ribosomal protein bL21 family. In terms of assembly, part of the 50S ribosomal subunit. Contacts protein L20.

Its function is as follows. This protein binds to 23S rRNA in the presence of protein L20. The protein is Large ribosomal subunit protein bL21 of Thermotoga sp. (strain RQ2).